An 803-amino-acid chain; its full sequence is Mechanosensitive cation channel TMEM63A (803 aa).

At 1 to 51 the chain is on the extracellular side; sequence MTDSPFLELWQSRTVAIRERLGIGDQPNDSYCYNSAKNSTVLQGVTFGGIP. The chain crosses the membrane as a helical span at residues 52–74; the sequence is TVLFIDVSCFLFLIVVFSIIRRK. Residues 75-133 are Cytoplasmic-facing; the sequence is FWDYGRIALVSEGNSESRFRRLSSSSSGQQDFESELGCCSWLTAIFRLHDDQILEWCGE. Residues 134–166 traverse the membrane as a helical segment; that stretch reads DAIHYLSFQRHIIFLLVVVSCLSLCIILPVNLS. Residues 167–190 are Extracellular-facing; it reads GDLLDKDPYSFGRTTIANLQTDNN. The chain crosses the membrane as a helical span at residues 191 to 216; sequence LLWLHTIFAILYLILTVVFMRHHTQS. Over 217 to 415 the chain is Cytoplasmic; it reads IKYKEESLVR…CWKNLSIQGF (199 aa). Residues 218–413 are intracellular linker IL2; confers mechanosensitivity; it reads KYKEESLVRR…DICWKNLSIQ (196 aa). Residues 416–443 form a helical membrane-spanning segment; the sequence is RWWFQWLGINFILFVGLFFLTTPSIILS. The Extracellular segment spans residues 444-461; the sequence is TMDKFNVTKPIHALNDPI. A helical transmembrane segment spans residues 462-489; that stretch reads ISQFFPTLLLWSFSALLPTIVCYSTLLE. Over 490–494 the chain is Cytoplasmic; that stretch reads SHWTK. A helical transmembrane segment spans residues 495–531; sequence SGENRIMMTKVYIFLIFMVLILPSLGLTSLDFFFRWL. The Extracellular segment spans residues 532 to 553; it reads FDKTSSEASIRLECVFLPDQGA. Residues 554–585 traverse the membrane as a helical segment; it reads FFVNYVIASAFIGNGMELLRLPGLILYTFRMV. The interval 554–585 is gating helix; sequence FFVNYVIASAFIGNGMELLRLPGLILYTFRMV. The Cytoplasmic portion of the chain corresponds to 586-605; sequence MAKTAADRRNVKQHQAFEYE. The helical transmembrane segment at 606-623 threads the bilayer; the sequence is FGAMYAWMLCVFTVIMAY. At 624–627 the chain is on the extracellular side; it reads SITC. The helical transmembrane segment at 628 to 650 threads the bilayer; sequence PIIVPFGLIYILLKHMVDRHNLY. Residues 651 to 660 lie on the Cytoplasmic side of the membrane; the sequence is FAYLPAKLEK. Residues 661 to 688 form a helical membrane-spanning segment; that stretch reads RIHFAAVNQALAAPILCLFWLYFFSFLR. The Extracellular portion of the chain corresponds to 689 to 693; that stretch reads LGLKA. A helical transmembrane segment spans residues 694 to 708; it reads PLTLFTFLVLLLTIL. The Cytoplasmic segment spans residues 709–803; it reads VCLAYTCFGC…DSVAAADQED (95 aa).

Belongs to the CSC1 (TC 1.A.17) family. (Microbial infection) Interacts with H.contortus GAL-1 (via domain galectin 1).

It is found in the lysosome membrane. The protein resides in the early endosome membrane. It localises to the cell membrane. The catalysed reaction is Ca(2+)(in) = Ca(2+)(out). In terms of biological role, mechanosensitive cation channel with low conductance and high activation threshold. In contrast to TMEM63B, does not show phospholipid scramblase activity. Acts as a regulator of lysosomal morphology by mediating lysosomal mechanosensitivity. Important for the baby's first breath and respiration throughout life. Upon lung inflation conducts cation currents in alveolar type 1 and 2 cells triggering lamellar body exocytosis and surfactant secretion into airspace. Also acts as an osmosensitive cation channel preferentially activated by hypotonic stress. (Microbial infection) Involved in the immunomodulatory effects exerted by H.contortus GAL-1 on host peripheral blood mononuclear cells to down-regulate host immune response. The protein is Mechanosensitive cation channel TMEM63A (TMEM63A) of Capra hircus (Goat).